The following is a 276-amino-acid chain: Dermonecrotic toxin LlSicTox-alphaIV2iii (276 aa).

H5 is a catalytic residue. E25 and D27 together coordinate Mg(2+). The active-site Nucleophile is the H41. 2 disulfide bridges follow: C45–C51 and C47–C193. Position 85 (D85) interacts with Mg(2+).

This sequence belongs to the arthropod phospholipase D family. Class II subfamily. It depends on Mg(2+) as a cofactor. In terms of tissue distribution, expressed by the venom gland.

The protein resides in the secreted. The catalysed reaction is an N-(acyl)-sphingosylphosphocholine = an N-(acyl)-sphingosyl-1,3-cyclic phosphate + choline. It catalyses the reaction an N-(acyl)-sphingosylphosphoethanolamine = an N-(acyl)-sphingosyl-1,3-cyclic phosphate + ethanolamine. The enzyme catalyses a 1-acyl-sn-glycero-3-phosphocholine = a 1-acyl-sn-glycero-2,3-cyclic phosphate + choline. It carries out the reaction a 1-acyl-sn-glycero-3-phosphoethanolamine = a 1-acyl-sn-glycero-2,3-cyclic phosphate + ethanolamine. Dermonecrotic toxins cleave the phosphodiester linkage between the phosphate and headgroup of certain phospholipids (sphingolipid and lysolipid substrates), forming an alcohol (often choline) and a cyclic phosphate. This toxin acts on sphingomyelin (SM). It may also act on ceramide phosphoethanolamine (CPE), lysophosphatidylcholine (LPC) and lysophosphatidylethanolamine (LPE), but not on lysophosphatidylserine (LPS), and lysophosphatidylglycerol (LPG). It acts by transphosphatidylation, releasing exclusively cyclic phosphate products as second products. Induces dermonecrosis, hemolysis, increased vascular permeability, edema, inflammatory response, and platelet aggregation. This Loxosceles laeta (South American recluse spider) protein is Dermonecrotic toxin LlSicTox-alphaIV2iii.